Reading from the N-terminus, the 149-residue chain is Glutamyl-tRNA(Gln) amidotransferase subunit C, mitochondrial (149 aa).

The protein belongs to the GatC family. As to quaternary structure, subunit of the heterotrimeric GatCAB amidotransferase (AdT) complex, composed of A, B and C subunits.

The protein localises to the mitochondrion. The enzyme catalyses L-glutamyl-tRNA(Gln) + L-glutamine + ATP + H2O = L-glutaminyl-tRNA(Gln) + L-glutamate + ADP + phosphate + H(+). Functionally, allows the formation of correctly charged Gln-tRNA(Gln) through the transamidation of misacylated Glu-tRNA(Gln) in the mitochondria. The reaction takes place in the presence of glutamine and ATP through an activated gamma-phospho-Glu-tRNA(Gln). The chain is Glutamyl-tRNA(Gln) amidotransferase subunit C, mitochondrial from Trichoplax adhaerens (Trichoplax reptans).